A 225-amino-acid polypeptide reads, in one-letter code: Biosynthetic peptidoglycan transglycosylase (225 aa).

Residues 8 to 28 traverse the membrane as a helical segment; the sequence is VLLIFIGAILLIQLWIFSSLV.

Belongs to the glycosyltransferase 51 family.

The protein resides in the cell inner membrane. It carries out the reaction [GlcNAc-(1-&gt;4)-Mur2Ac(oyl-L-Ala-gamma-D-Glu-L-Lys-D-Ala-D-Ala)](n)-di-trans,octa-cis-undecaprenyl diphosphate + beta-D-GlcNAc-(1-&gt;4)-Mur2Ac(oyl-L-Ala-gamma-D-Glu-L-Lys-D-Ala-D-Ala)-di-trans,octa-cis-undecaprenyl diphosphate = [GlcNAc-(1-&gt;4)-Mur2Ac(oyl-L-Ala-gamma-D-Glu-L-Lys-D-Ala-D-Ala)](n+1)-di-trans,octa-cis-undecaprenyl diphosphate + di-trans,octa-cis-undecaprenyl diphosphate + H(+). The protein operates within cell wall biogenesis; peptidoglycan biosynthesis. Its function is as follows. Peptidoglycan polymerase that catalyzes glycan chain elongation from lipid-linked precursors. This chain is Biosynthetic peptidoglycan transglycosylase, found in Acinetobacter baumannii (strain AB307-0294).